A 709-amino-acid chain; its full sequence is Elongation factor G (709 aa).

The 290-residue stretch at 8–297 (ANTRNIGIMA…AVIDYLPSPL (290 aa)) folds into the tr-type G domain. GTP is bound by residues 17 to 24 (AHVDAGKT), 81 to 85 (DTPGH), and 135 to 138 (NKMD).

This sequence belongs to the TRAFAC class translation factor GTPase superfamily. Classic translation factor GTPase family. EF-G/EF-2 subfamily.

It localises to the cytoplasm. Functionally, catalyzes the GTP-dependent ribosomal translocation step during translation elongation. During this step, the ribosome changes from the pre-translocational (PRE) to the post-translocational (POST) state as the newly formed A-site-bound peptidyl-tRNA and P-site-bound deacylated tRNA move to the P and E sites, respectively. Catalyzes the coordinated movement of the two tRNA molecules, the mRNA and conformational changes in the ribosome. In Lactococcus lactis subsp. cremoris (strain MG1363), this protein is Elongation factor G.